A 290-amino-acid chain; its full sequence is tRNA (guanine-N(7)-)-methyltransferase (290 aa).

Basic and acidic residues-rich tracts occupy residues 1-12 and 20-43; these read MSDSLHTPEEPR and AHAH…DGPK. The segment at 1–49 is disordered; that stretch reads MSDSLHTPEEPRPGPGEQLAHAHDGSLRHTRAKGEPRFPDGPKADPAGS. Residues Glu-104, Asp-129, Asp-156, and Asp-179 each coordinate S-adenosyl-L-methionine. The active site involves Asp-179. Substrate-binding positions include Lys-183, Asp-215, and 252–255; that span reads TRFE.

Belongs to the class I-like SAM-binding methyltransferase superfamily. TrmB family.

It catalyses the reaction guanosine(46) in tRNA + S-adenosyl-L-methionine = N(7)-methylguanosine(46) in tRNA + S-adenosyl-L-homocysteine. It functions in the pathway tRNA modification; N(7)-methylguanine-tRNA biosynthesis. Functionally, catalyzes the formation of N(7)-methylguanine at position 46 (m7G46) in tRNA. This is tRNA (guanine-N(7)-)-methyltransferase from Streptomyces avermitilis (strain ATCC 31267 / DSM 46492 / JCM 5070 / NBRC 14893 / NCIMB 12804 / NRRL 8165 / MA-4680).